Consider the following 667-residue polypeptide: Beta-galactosidase LacZ (667 aa).

Position 109 (Arg-109) interacts with substrate. Cys-113 provides a ligand contact to Zn(2+). Asn-147 serves as a coordination point for substrate. The active-site Proton donor is Glu-148. Positions 153, 155, and 158 each coordinate Zn(2+). Glu-307 (nucleophile) is an active-site residue. Residues Trp-315 and 355–358 each bind substrate; that span reads EKFH.

The protein belongs to the glycosyl hydrolase 42 family.

The catalysed reaction is Hydrolysis of terminal non-reducing beta-D-galactose residues in beta-D-galactosides.. In terms of biological role, catalyzes the hydrolysis of lactose to its constituent monosaccharides glucose and galactose. In Lactobacillus acidophilus (strain ATCC 700396 / NCK56 / N2 / NCFM), this protein is Beta-galactosidase LacZ.